The following is a 272-amino-acid chain: NAD kinase (272 aa).

Residue D62 is the Proton acceptor of the active site. NAD(+) is bound by residues 62–63, R67, 129–130, R140, K157, D159, I167, 170–175, A194, and Q229; these read DG, NE, and SSYSSS.

Belongs to the NAD kinase family. It depends on a divalent metal cation as a cofactor.

Its subcellular location is the cytoplasm. The enzyme catalyses NAD(+) + ATP = ADP + NADP(+) + H(+). In terms of biological role, involved in the regulation of the intracellular balance of NAD and NADP, and is a key enzyme in the biosynthesis of NADP. Catalyzes specifically the phosphorylation on 2'-hydroxyl of the adenosine moiety of NAD to yield NADP. This Thermoplasma acidophilum (strain ATCC 25905 / DSM 1728 / JCM 9062 / NBRC 15155 / AMRC-C165) protein is NAD kinase.